Reading from the N-terminus, the 145-residue chain is Ribonuclease HI (145 aa).

Residues 1 to 142 form the RNase H type-1 domain; that stretch reads MNQTVYLYTD…ADDLANRGAA (142 aa). 4 residues coordinate Mg(2+): aspartate 10, glutamate 48, aspartate 70, and aspartate 134.

It belongs to the RNase H family. As to quaternary structure, monomer. The cofactor is Mg(2+).

Its subcellular location is the cytoplasm. The catalysed reaction is Endonucleolytic cleavage to 5'-phosphomonoester.. In terms of biological role, endonuclease that specifically degrades the RNA of RNA-DNA hybrids. The polypeptide is Ribonuclease HI (Neisseria meningitidis serogroup B (strain ATCC BAA-335 / MC58)).